The primary structure comprises 1922 residues: Endoribonuclease Dicer (1922 aa).

One can recognise a Helicase ATP-binding domain in the interval Leu51 to Glu227. Position 64-71 (Leu64–Thr71) interacts with ATP. The DECH box signature appears at Asp175–His178. Positions Asp256–Asp595 are required for interaction with PRKRA and TARBP2. Positions Tyr409–Asn433 are disordered. Residues Ser413 and Ser415 each carry the phosphoserine modification. Acidic residues predominate over residues Asp414–Glu425. The 170-residue stretch at Asn433–Asp602 folds into the Helicase C-terminal domain. The region spanning Ala630 to Tyr722 is the Dicer dsRNA-binding fold domain. Residues Lys895–Pro1042 form the PAZ domain. Ser1016 and Ser1160 each carry phosphoserine. One can recognise an RNase III 1 domain in the interval Asp1276–Thr1403. The Mg(2+) site is built by Glu1316, Asp1395, and Glu1398. A phosphoserine mark is found at Ser1460, Ser1468, and Ser1470. The RNase III 2 domain occupies Phe1666–Gly1824. Mg(2+)-binding residues include Glu1705, Asp1810, and Glu1813. The DRBM domain maps to Val1849–Ala1914. At Ser1868 the chain carries Phosphoserine.

It belongs to the helicase family. Dicer subfamily. In terms of assembly, component of the RISC loading complex (RLC), or micro-RNA (miRNA) loading complex (miRLC), which is composed of DICER1, AGO2 and TARBP2; DICER1 and TARBP2 are required to process precursor miRNAs (pre-miRNAs) to mature miRNAs and then load them onto AGO2. Note that the trimeric RLC/miRLC is also referred to as RISC. Interacts with DHX9, AGO1, PIWIL1 and PRKRA. Associates with the 60S ribosome. Interacts with BCDIN3D. Interacts with AGO2, TARBP2, EIF6, MOV10 and RPL7A (60S ribosome subunit); they form a large RNA-induced silencing complex (RISC). Interacts (via Dicer dsRNA-binding fold domain) with ALOX5 (via PLAT domain); this interaction enhances arachidonate 5-lipoxygenase activity and modifies the miRNA precursor processing activity of DICER1. As to quaternary structure, (Microbial infection) Interacts with ebolavirus transcriptional activator VP30; this interaction prevents TARBP2/TRBP binding to DICER1 and thus allows the virus to counteract host RNA silencing. (Microbial infection) Interacts with ebolavirus transcriptional activator VP35; this interaction prevents TARBP2/TRBP binding to DICER1 and thus allows the virus to counteract host RNA silencing. It depends on Mg(2+) as a cofactor. Requires Mn(2+) as cofactor.

It localises to the cytoplasm. The protein localises to the perinuclear region. The catalysed reaction is Endonucleolytic cleavage to 5'-phosphomonoester.. Functionally, double-stranded RNA (dsRNA) endoribonuclease playing a central role in short dsRNA-mediated post-transcriptional gene silencing. Cleaves naturally occurring long dsRNAs and short hairpin pre-microRNAs (miRNA) into fragments of twenty-one to twenty-three nucleotides with 3' overhang of two nucleotides, producing respectively short interfering RNAs (siRNA) and mature microRNAs. SiRNAs and miRNAs serve as guide to direct the RNA-induced silencing complex (RISC) to complementary RNAs to degrade them or prevent their translation. Gene silencing mediated by siRNAs, also called RNA interference, controls the elimination of transcripts from mobile and repetitive DNA elements of the genome but also the degradation of exogenous RNA of viral origin for instance. The miRNA pathway on the other side is a mean to specifically regulate the expression of target genes. This chain is Endoribonuclease Dicer (DICER1), found in Homo sapiens (Human).